A 316-amino-acid polypeptide reads, in one-letter code: Ribosomal RNA small subunit methyltransferase H (316 aa).

S-adenosyl-L-methionine-binding positions include 35-37 (GGH), Asp-55, Phe-79, Asp-101, and Gln-108. Residues 291–316 (ALKPSDQEVELNPRSRSSVLRVAEKL) are disordered.

Belongs to the methyltransferase superfamily. RsmH family.

It localises to the cytoplasm. The enzyme catalyses cytidine(1402) in 16S rRNA + S-adenosyl-L-methionine = N(4)-methylcytidine(1402) in 16S rRNA + S-adenosyl-L-homocysteine + H(+). Its function is as follows. Specifically methylates the N4 position of cytidine in position 1402 (C1402) of 16S rRNA. The polypeptide is Ribosomal RNA small subunit methyltransferase H (Vibrio cholerae serotype O1 (strain ATCC 39315 / El Tor Inaba N16961)).